Consider the following 258-residue polypeptide: 5'-nucleotidase SurE (258 aa).

Residues D8, D9, S40, and N92 each coordinate a divalent metal cation.

Belongs to the SurE nucleotidase family. A divalent metal cation is required as a cofactor.

The protein localises to the cytoplasm. The catalysed reaction is a ribonucleoside 5'-phosphate + H2O = a ribonucleoside + phosphate. Nucleotidase that shows phosphatase activity on nucleoside 5'-monophosphates. The polypeptide is 5'-nucleotidase SurE (Brucella anthropi (strain ATCC 49188 / DSM 6882 / CCUG 24695 / JCM 21032 / LMG 3331 / NBRC 15819 / NCTC 12168 / Alc 37) (Ochrobactrum anthropi)).